The following is a 135-amino-acid chain: Ribonuclease P protein component (135 aa).

The protein belongs to the RnpA family. Consists of a catalytic RNA component (M1 or rnpB) and a protein subunit.

It carries out the reaction Endonucleolytic cleavage of RNA, removing 5'-extranucleotides from tRNA precursor.. In terms of biological role, RNaseP catalyzes the removal of the 5'-leader sequence from pre-tRNA to produce the mature 5'-terminus. It can also cleave other RNA substrates such as 4.5S RNA. The protein component plays an auxiliary but essential role in vivo by binding to the 5'-leader sequence and broadening the substrate specificity of the ribozyme. This Xylella fastidiosa (strain 9a5c) protein is Ribonuclease P protein component.